Here is a 172-residue protein sequence, read N- to C-terminus: dCTP deaminase (172 aa).

Residues 97–102 (RSSFAR) and Asp-113 each bind dCTP. Catalysis depends on Glu-123, which acts as the Proton donor/acceptor. The dCTP site is built by Tyr-155 and Gln-162.

This sequence belongs to the dCTP deaminase family. As to quaternary structure, homotrimer.

It carries out the reaction dCTP + H2O + H(+) = dUTP + NH4(+). The protein operates within pyrimidine metabolism; dUMP biosynthesis; dUMP from dCTP (dUTP route): step 1/2. Catalyzes the deamination of dCTP to dUTP. In Metallosphaera sedula (strain ATCC 51363 / DSM 5348 / JCM 9185 / NBRC 15509 / TH2), this protein is dCTP deaminase.